We begin with the raw amino-acid sequence, 126 residues long: Glycine cleavage system H protein (126 aa).

The Lipoyl-binding domain occupies Lys23–Ile104. N6-lipoyllysine is present on Lys64.

Belongs to the GcvH family. In terms of assembly, the glycine cleavage system is composed of four proteins: P, T, L and H. (R)-lipoate is required as a cofactor.

In terms of biological role, the glycine cleavage system catalyzes the degradation of glycine. The H protein shuttles the methylamine group of glycine from the P protein to the T protein. In Chlorobium phaeobacteroides (strain BS1), this protein is Glycine cleavage system H protein.